A 216-amino-acid chain; its full sequence is Octanoyltransferase (216 aa).

The region spanning 32–207 is the BPL/LPL catalytic domain; sequence ENSPDELWLV…TFSQLLGYEH (176 aa). Substrate contacts are provided by residues 71–78, 138–140, and 151–153; these read RGGQVTYH, SLG, and GLA. Residue cysteine 169 is the Acyl-thioester intermediate of the active site.

This sequence belongs to the LipB family.

The protein localises to the cytoplasm. It carries out the reaction octanoyl-[ACP] + L-lysyl-[protein] = N(6)-octanoyl-L-lysyl-[protein] + holo-[ACP] + H(+). It functions in the pathway protein modification; protein lipoylation via endogenous pathway; protein N(6)-(lipoyl)lysine from octanoyl-[acyl-carrier-protein]: step 1/2. In terms of biological role, catalyzes the transfer of endogenously produced octanoic acid from octanoyl-acyl-carrier-protein onto the lipoyl domains of lipoate-dependent enzymes. Lipoyl-ACP can also act as a substrate although octanoyl-ACP is likely to be the physiological substrate. The polypeptide is Octanoyltransferase (Shewanella amazonensis (strain ATCC BAA-1098 / SB2B)).